Reading from the N-terminus, the 675-residue chain is Potassium-transporting ATPase ATP-binding subunit 2 (675 aa).

4 helical membrane passes run 34–54 (IMFVVEVGMLLTLILICFPDI), 65–85 (LITIFIILLITILFANFSEAF), 216–236 (IALFTLLTTLTIIFLVVIVTL), and 245–265 (LILPIAMLIALTVCLIPTTIG). The active-site 4-aspartylphosphate intermediate is D304. Residues D341, E345, 372-379 (FTAETRMS), and K390 each bind ATP. 2 residues coordinate Mg(2+): D513 and D517. 3 consecutive transmembrane segments (helical) span residues 569–591 (ALTTFSLANDVAKYFAILPALMM), 611–631 (AIISALIFNALIIVALIPIAM), and 644–664 (IFINNMLIYGLGGLIVPFLGI).

It belongs to the cation transport ATPase (P-type) (TC 3.A.3) family. Type IA subfamily. In terms of assembly, the system is composed of three essential subunits: KdpA, KdpB and KdpC.

The protein localises to the cell membrane. It catalyses the reaction K(+)(out) + ATP + H2O = K(+)(in) + ADP + phosphate + H(+). In terms of biological role, part of the high-affinity ATP-driven potassium transport (or Kdp) system, which catalyzes the hydrolysis of ATP coupled with the electrogenic transport of potassium into the cytoplasm. This subunit is responsible for energy coupling to the transport system and for the release of the potassium ions to the cytoplasm. This chain is Potassium-transporting ATPase ATP-binding subunit 2, found in Staphylococcus aureus (strain MRSA252).